The sequence spans 506 residues: Cytochrome P450 monooxygenase atr2 (506 aa).

A helical transmembrane segment spans residues 18 to 38 (VFAGLVLASLLTTTYCIWNIF). Cysteine 451 is a binding site for heme.

It belongs to the cytochrome P450 family. Heme serves as cofactor.

The protein localises to the membrane. It catalyses the reaction 4-O-demethylbarbatate + reduced [NADPH--hemoprotein reductase] + O2 = proatranorin II + oxidized [NADPH--hemoprotein reductase] + H2O + H(+). It carries out the reaction proatranorin II + reduced [NADPH--hemoprotein reductase] + O2 = proatranorin III + oxidized [NADPH--hemoprotein reductase] + 2 H2O + H(+). The catalysed reaction is proatranorin I + reduced [NADPH--hemoprotein reductase] + O2 = proatranorin IV + oxidized [NADPH--hemoprotein reductase] + H2O + H(+). The enzyme catalyses proatranorin IV + reduced [NADPH--hemoprotein reductase] + O2 = atranorin + oxidized [NADPH--hemoprotein reductase] + 2 H2O + H(+). It functions in the pathway secondary metabolite biosynthesis; terpenoid biosynthesis. Functionally, cytochrome P450 monooxygenase; part of the gene cluster that mediates the biosynthesis of atranorin, a depside of polyketide origin that accumulates in the cortical or medullary layers of lichen thalli. Atr2 performs the oxidation at the C-9 position of 4-O-demethylbarbatic acid to yield proatranorin III via proatranorin II. Atr2 is also able to oxidize the atr3 product proatranorin I to produce the final compound atranorin. The first step in the pathway is performed by the non-reducing polyketide synthase atr1 that produces 4-O-demethylbarbatic acid composed of two 3-methylorsellinic acid (3MOA) moieties. The pathway continues with the actions of the cytochrome P450 monooygenase atr2 that catalizes the oxidation of c-9 and the O-methyltransferase atr3 that performs the methylation of the carboxyl group to yield atranorin, via the proatranorin II and III intermediates if atr2 acts first, or the proatranorin I intermediate if atr3 acts first. This chain is Cytochrome P450 monooxygenase atr2, found in Stereocaulon alpinum (Alpine snow lichen).